We begin with the raw amino-acid sequence, 190 residues long: Xanthine phosphoribosyltransferase (190 aa).

Residues Leu-20 and Asn-27 each coordinate xanthine. Residue 128–132 (ANGHA) participates in 5-phospho-alpha-D-ribose 1-diphosphate binding. Lys-156 contacts xanthine.

This sequence belongs to the purine/pyrimidine phosphoribosyltransferase family. Xpt subfamily. In terms of assembly, homodimer.

It is found in the cytoplasm. The enzyme catalyses XMP + diphosphate = xanthine + 5-phospho-alpha-D-ribose 1-diphosphate. It participates in purine metabolism; XMP biosynthesis via salvage pathway; XMP from xanthine: step 1/1. Its function is as follows. Converts the preformed base xanthine, a product of nucleic acid breakdown, to xanthosine 5'-monophosphate (XMP), so it can be reused for RNA or DNA synthesis. The chain is Xanthine phosphoribosyltransferase from Pseudomonas paraeruginosa (strain DSM 24068 / PA7) (Pseudomonas aeruginosa (strain PA7)).